The sequence spans 57 residues: UPF0434 protein Spea_1772 (57 aa).

It belongs to the UPF0434 family.

The sequence is that of UPF0434 protein Spea_1772 from Shewanella pealeana (strain ATCC 700345 / ANG-SQ1).